The primary structure comprises 113 residues: Nitrogenase-stabilizing/protective protein NifW (113 aa).

Belongs to the NifW family. As to quaternary structure, homotrimer; associates with NifD.

Its function is as follows. May protect the nitrogenase Fe-Mo protein from oxidative damage. In Dechloromonas aromatica (strain RCB), this protein is Nitrogenase-stabilizing/protective protein NifW.